The sequence spans 174 residues: Shikimate kinase 2 (174 aa).

12 to 17 (GCGKTT) contacts ATP. Residues threonine 16 and aspartate 32 each coordinate Mg(2+). The substrate site is built by aspartate 34, arginine 58, and glycine 79. Positions 112 to 126 (QAAPEEDLRPTLTGK) are LID domain. Position 120 (arginine 120) interacts with ATP. Arginine 139 provides a ligand contact to substrate.

It belongs to the shikimate kinase family. AroL subfamily. As to quaternary structure, monomer. Mg(2+) serves as cofactor.

It is found in the cytoplasm. The catalysed reaction is shikimate + ATP = 3-phosphoshikimate + ADP + H(+). It functions in the pathway metabolic intermediate biosynthesis; chorismate biosynthesis; chorismate from D-erythrose 4-phosphate and phosphoenolpyruvate: step 5/7. Its function is as follows. Catalyzes the specific phosphorylation of the 3-hydroxyl group of shikimic acid using ATP as a cosubstrate. This is Shikimate kinase 2 from Shigella boydii serotype 18 (strain CDC 3083-94 / BS512).